We begin with the raw amino-acid sequence, 435 residues long: IAA-amino acid hydrolase ILR1-like 5 (435 aa).

An N-terminal signal peptide occupies residues 1 to 25 (MSFCKLVSFVLILHLLNSCLISCSS). Cys134, His136, Glu170, His194, and His397 together coordinate Mn(2+). The Prevents secretion from ER motif lies at 432-435 (KDEL).

Belongs to the peptidase M20 family.

The protein resides in the endoplasmic reticulum lumen. Functionally, hydrolyzes certain amino acid conjugates of the plant growth regulator indole-3-acetic acid (IAA). This chain is IAA-amino acid hydrolase ILR1-like 5, found in Arabidopsis thaliana (Mouse-ear cress).